Consider the following 39-residue polypeptide: Photosystem I reaction center subunit IX (39 aa).

A helical transmembrane segment spans residues 7–27 (FLTTAPVAFILFSSFVFALFI).

The protein belongs to the PsaJ family.

It localises to the cellular thylakoid membrane. May help in the organization of the PsaE and PsaF subunits. The polypeptide is Photosystem I reaction center subunit IX (Synechococcus sp. (strain JA-2-3B'a(2-13)) (Cyanobacteria bacterium Yellowstone B-Prime)).